We begin with the raw amino-acid sequence, 645 residues long: Zinc finger protein 64 (645 aa).

3 C2H2-type zinc fingers span residues 175-197 (HKCE…MRCH), 203-225 (YKCK…LRIH), and 231-253 (FKCQ…LRSH). A Glycyl lysine isopeptide (Lys-Gly) (interchain with G-Cter in SUMO2) cross-link involves residue Glu-286. The C2H2-type 4; atypical zinc finger occupies 299–324 (FNCCYPGCHFKTVHGMKDLDRHLRIH). C2H2-type zinc fingers lie at residues 330 to 352 (HKCE…MRCH), 358 to 380 (HKCH…LRIH), 386 to 408 (YKCQ…LRSH), 414 to 436 (FQCW…MIVH), 442 to 465 (FKCE…RIKH), 467 to 489 (FKCL…SRLH), 495 to 517 (EKCP…SRVH), 523 to 546 (FKCD…DKVH), and 580 to 602 (FRCE…KKQH). Asn-397 participates in a covalent cross-link: Glycyl lysine isopeptide (Lys-Gly) (interchain with G-Cter in SUMO2). Composition is skewed to basic and acidic residues over residues 543-554 (DKVHRDEAKTEN) and 600-610 (KQHSDQSENKN). Disordered regions lie at residues 543–567 (DKVH…REGS) and 600–645 (KQHS…SQDL). A Phosphoserine modification is found at Val-545. Residues 622–631 (ASGQLSTLVS) show a composition bias toward polar residues.

The protein belongs to the krueppel C2H2-type zinc-finger protein family. Interacts with ZNF70; this interaction promote the transactivation of the HES1 gene. Interacts with NOTCH1.

The protein resides in the nucleus. May be involved in the regulation of mesenchymal cell differentiation through transactivation of NOTCH1 target genes. In Homo sapiens (Human), this protein is Zinc finger protein 64.